Consider the following 378-residue polypeptide: MTADTTAVSVVASATRLVAKVGSSLVTNEGRGLDRAAVAHWAAQIAALRQQGKQVVLVSSGAIAEGMARLGWRKRPSVMHELQAAAAVGQMGLCQAYEAAFAEHGLRTAQILLTHEDLADRHRYLNARSTLFALMRLGVVPIVNENDTVVTDEIRLGDNDTLGALVTNLIEADALVILTDQRGLYDSDPRKNPDAVFVAHAQAGDPELEAMAGGAGSGIGTGGMLTKILAAKRAAHSGAHTVIASGRERNVLTRLAQGECIGTELRAVLPVWSARKQWLADHLRLRGRVVLDAGAVRALLHEGKSLLPIGVIDVQGEFERGDVVACIDPQGAECARGLINYSSADTRRILRQPSSQIARILGSMTDPELMHRDNLVVI.

Lys-20 is a binding site for ATP. Ser-60, Asp-147, and Asn-159 together coordinate substrate. Residues 179–180 (TD) and 221–227 (TGGMLTK) contribute to the ATP site. Residues 286-364 (RGRVVLDAGA…SQIARILGSM (79 aa)) enclose the PUA domain.

It belongs to the glutamate 5-kinase family.

It is found in the cytoplasm. It catalyses the reaction L-glutamate + ATP = L-glutamyl 5-phosphate + ADP. The protein operates within amino-acid biosynthesis; L-proline biosynthesis; L-glutamate 5-semialdehyde from L-glutamate: step 1/2. Catalyzes the transfer of a phosphate group to glutamate to form L-glutamate 5-phosphate. This is Glutamate 5-kinase from Bordetella petrii (strain ATCC BAA-461 / DSM 12804 / CCUG 43448).